Here is a 262-residue protein sequence, read N- to C-terminus: 3-methyl-2-oxobutanoate hydroxymethyltransferase (262 aa).

2 residues coordinate Mg(2+): Asp-44 and Asp-83. 3-methyl-2-oxobutanoate is bound by residues 44–45 (DS), Asp-83, and Lys-111. Glu-113 contacts Mg(2+). The Proton acceptor role is filled by Glu-180.

Belongs to the PanB family. In terms of assembly, homodecamer; pentamer of dimers. Mg(2+) serves as cofactor.

Its subcellular location is the cytoplasm. It catalyses the reaction 3-methyl-2-oxobutanoate + (6R)-5,10-methylene-5,6,7,8-tetrahydrofolate + H2O = 2-dehydropantoate + (6S)-5,6,7,8-tetrahydrofolate. Its pathway is cofactor biosynthesis; (R)-pantothenate biosynthesis; (R)-pantoate from 3-methyl-2-oxobutanoate: step 1/2. Catalyzes the reversible reaction in which hydroxymethyl group from 5,10-methylenetetrahydrofolate is transferred onto alpha-ketoisovalerate to form ketopantoate. The polypeptide is 3-methyl-2-oxobutanoate hydroxymethyltransferase (Alcanivorax borkumensis (strain ATCC 700651 / DSM 11573 / NCIMB 13689 / SK2)).